Consider the following 539-residue polypeptide: uncharacterized protein (539 aa).

The interval 34 to 63 is disordered; sequence AASEVSPIPQERPTTSLRKPTPRVQRPATD. The next 11 membrane-spanning stretches (helical) occupy residues 103-123, 141-161, 184-204, 244-264, 277-299, 325-345, 360-380, 399-419, 434-454, 470-490, and 496-516; these read FATPVVLTSLLQYGEVVTTVF, MTATITAFAIYQGIVSALDTV, ILLLIQFPIFLIWWKIEGILL, GIFHPVTYILAIVVPINIFLN, FLGAPVAVALTLWSACAVLIIYI, LAVPGVIMICSEYWAFELVTF, VLSTTSTLSYNLAFGVAAAAA, THVSINLGAAIGVIIAVILFL, VVALVATIIPLVALINIADNT, IGGVVNFIAYYLLGLPVAIIL, and WGLYGLWIGIGAAILIIAGVE.

Belongs to the multi antimicrobial extrusion (MATE) (TC 2.A.66.1) family.

The protein resides in the vacuole membrane. This is an uncharacterized protein from Schizosaccharomyces pombe (strain 972 / ATCC 24843) (Fission yeast).